The chain runs to 164 residues: Phosphopantetheine adenylyltransferase (164 aa).

Serine 9 is a binding site for substrate. ATP is bound by residues 9–10 (SF) and histidine 17. The substrate site is built by lysine 41, leucine 73, and lysine 87. ATP is bound by residues 88–90 (GLR), glutamate 98, and 123–129 (YSYISSS).

The protein belongs to the bacterial CoaD family. In terms of assembly, homohexamer. Requires Mg(2+) as cofactor.

It localises to the cytoplasm. The enzyme catalyses (R)-4'-phosphopantetheine + ATP + H(+) = 3'-dephospho-CoA + diphosphate. Its pathway is cofactor biosynthesis; coenzyme A biosynthesis; CoA from (R)-pantothenate: step 4/5. In terms of biological role, reversibly transfers an adenylyl group from ATP to 4'-phosphopantetheine, yielding dephospho-CoA (dPCoA) and pyrophosphate. The polypeptide is Phosphopantetheine adenylyltransferase (Clostridium perfringens (strain 13 / Type A)).